Consider the following 199-residue polypeptide: VAMP-like protein YKT61 (199 aa).

Positions 7–133 (LVLKCAPEAS…LTEALNKFQD (127 aa)) constitute a Longin domain. A v-SNARE coiled-coil homology domain is found at 139 to 199 (KLLKIQRELD…KKTNSCCTIL (61 aa)). Cys195 is lipidated: S-palmitoyl cysteine. The residue at position 196 (Cys196) is a Cysteine methyl ester. A lipid anchor (S-geranylgeranyl cysteine) is attached at Cys196. Positions 197–199 (TIL) are cleaved as a propeptide — removed in mature form.

Belongs to the synaptobrevin family. As to quaternary structure, interacts with SYP41. Core constituent of the SNARE complex required for membrane fusion at the trans-Golgi network. Expressed ubiquitously in roots, stems, flowers and leaves.

Its subcellular location is the cell membrane. May be involved in the secretory pathway. Essential for membrane fusion mediated by either SYP41 or SYP61; triggers the fusion of phospholipid vesicles containing SYP41 or SYP61 and VTI12. The protein is VAMP-like protein YKT61 of Arabidopsis thaliana (Mouse-ear cress).